The chain runs to 373 residues: MAVKVLVVDDSGFFRRRVSEILSADSNIQVVGTATNGKEAIDQALALKPDVITMDYEMPMMDGITAVRHIMQRCPTPVLMFSSLTHEGARVTLDALDAGAVDFLPKNFEDISRNPEKVKQLLCEKVHSISRSNRRFSSYSAPAPQPASAPAPAPSSFASSRSPAPAPAPARAAAPAASANSPAPKRKAYKLVAIGTSTGGPVALQRVLTQLPANFPAPIVLIQHMPAAFTKAFAERLDKLCRISVKEAEDGDILRPGLALLAPGGKQMMVDGRGAVKILPGDERLNYKPCVDITFGSAAKSYSDKVLAVVLTGMGADGREGARLLKQGGSAVWAQDEASCVIYGMPMAIVKANLADAVYSLDDIGRHLVEACL.

Residues 4–121 (KVLVVDDSGF…SRNPEKVKQL (118 aa)) form the Response regulatory domain. A 4-aspartylphosphate modification is found at aspartate 55. The disordered stretch occupies residues 136–181 (FSSYSAPAPQPASAPAPAPSSFASSRSPAPAPAPARAAAPAASANS). Positions 143 to 153 (APQPASAPAPA) are enriched in pro residues. The span at 154-181 (PSSFASSRSPAPAPAPARAAAPAASANS) shows a compositional bias: low complexity. A CheB-type methylesterase domain is found at 182–370 (PAPKRKAYKL…LDDIGRHLVE (189 aa)). Residues serine 197, histidine 224, and aspartate 317 contribute to the active site.

It belongs to the CheB family. In terms of processing, phosphorylated by CheA. Phosphorylation of the N-terminal regulatory domain activates the methylesterase activity.

It localises to the cytoplasm. It carries out the reaction [protein]-L-glutamate 5-O-methyl ester + H2O = L-glutamyl-[protein] + methanol + H(+). The catalysed reaction is L-glutaminyl-[protein] + H2O = L-glutamyl-[protein] + NH4(+). Functionally, involved in chemotaxis. Part of a chemotaxis signal transduction system that modulates chemotaxis in response to various stimuli. Catalyzes the demethylation of specific methylglutamate residues introduced into the chemoreceptors (methyl-accepting chemotaxis proteins or MCP) by CheR. Also mediates the irreversible deamidation of specific glutamine residues to glutamic acid. The protein is Protein-glutamate methylesterase/protein-glutamine glutaminase 2 of Pseudomonas fluorescens (strain ATCC BAA-477 / NRRL B-23932 / Pf-5).